The following is a 386-amino-acid chain: Putrescine N-methyltransferase 4 (386 aa).

Composition is skewed to polar residues over residues 1–14 (MEVI…STIF), 23–48 (GHQS…GHHN), and 57–87 (HQNG…NGNE). The interval 1-87 (MEVISTNTNG…GTISHDNGNE (87 aa)) is disordered. Residues 97–334 (LGWFSEFSAL…GVIGYMLCST (238 aa)) form the PABS domain. S-adenosyl-L-methionine is bound by residues Gln-128, Glu-203, and 234–235 (DG). Catalysis depends on Asp-253, which acts as the Proton acceptor. Tyr-322 lines the S-adenosyl-L-methionine pocket.

It belongs to the class I-like SAM-binding methyltransferase superfamily. Putrescine methyltransferase family. As to expression, predominantly expressed in roots.

It carries out the reaction putrescine + S-adenosyl-L-methionine = N-methylputrescine + S-adenosyl-L-homocysteine + H(+). It participates in alkaloid biosynthesis; nicotine biosynthesis. Involved in the biosynthesis of pyridine alkaloid natural products, leading mainly to the production of anabasine, anatabine, nicotine and nornicotine, effective deterrents against herbivores with antiparasitic and pesticide properties (neurotoxins); nornicotine serves as the precursor in the synthesis of the carcinogen compound N'-nitrosonornicotine (NNN). Methyltransferase that mediates the conversion of putrescine to N-methylputrescine. Promotes leaves ripening. The chain is Putrescine N-methyltransferase 4 from Nicotiana tabacum (Common tobacco).